A 995-amino-acid chain; its full sequence is ATP-dependent RNA helicase DBP10 (995 aa).

Positions 1-120 (MAGVQKRKRD…TQTGDDEDDV (120 aa)) are disordered. 2 stretches are compositionally biased toward acidic residues: residues 12-25 (EDQD…DDIA) and 37-50 (SESD…EVEA). Residues 71–81 (VNNKKKAENKD) show a composition bias toward basic and acidic residues. Ser-101 carries the phosphoserine modification. The short motif at 137-165 (GSFPSFGLSKIVLNNIKRKGFRQPTPIQR) is the Q motif element. The region spanning 168–340 (IPLILQSRDI…KAGLVNPVLV (173 aa)) is the Helicase ATP-binding domain. 181–188 (ARTGSGKT) is an ATP binding site. The DEAD box signature appears at 288–291 (DEAD). Disordered stretches follow at residues 389-427 (LQNS…PAAN) and 889-973 (GSRE…EQIR). Ser-398 and Ser-400 each carry phosphoserine. 2 stretches are compositionally biased toward basic residues: residues 407–422 (QKKR…RKQK) and 914–924 (VRGKFKHKQMK). The Helicase C-terminal domain maps to 418 to 568 (FRKQKMPAAN…PMYDSLVDVM (151 aa)). Basic and acidic residues predominate over residues 964–973 (SELKSTEQIR).

Belongs to the DEAD box helicase family. DDX54/DBP10 subfamily. As to quaternary structure, interacts with RRP1 and associates with pre-ribosomal particles.

The protein resides in the nucleus. Its subcellular location is the nucleolus. It catalyses the reaction ATP + H2O = ADP + phosphate + H(+). Functionally, ATP-binding RNA helicase involved in the biogenesis of 60S ribosomal subunits and is required for the normal formation of 25S and 5.8S rRNAs. This Saccharomyces cerevisiae (strain ATCC 204508 / S288c) (Baker's yeast) protein is ATP-dependent RNA helicase DBP10 (DBP10).